The chain runs to 341 residues: MASEAPPFWWEEPDWKVLALSPLSAVYALVAGRVMRRARREKIEAPVLCVGNFTVGGTGKTPVAIALAQQAKRMQLKPGFLSRGHGGSFAEPHVVDAHHDAAKHVGDEPLLLAEHAPVAVTPNRAAGARLLMAKHGCDFLIMDDGFQSARIHIDYALIVVDARYGIGNGRVIPGGPLRAKIVDQLVFTSGLLKMGEGTAADAVVRQAARAGRPIFEARAEPISKAGLAGKRFLAFAGIGHPDKFFDTVREAGGEVVLSKPFPDHHFYAEDELAELAAVARAEGLGLITTAKDAARLRHGASQDFLNRLEVLEIDTVFELDHAPERIIEETLDAWRQRKLRS.

ATP is bound at residue 54-61 (TVGGTGKT).

This sequence belongs to the LpxK family.

The enzyme catalyses a lipid A disaccharide + ATP = a lipid IVA + ADP + H(+). Its pathway is glycolipid biosynthesis; lipid IV(A) biosynthesis; lipid IV(A) from (3R)-3-hydroxytetradecanoyl-[acyl-carrier-protein] and UDP-N-acetyl-alpha-D-glucosamine: step 6/6. In terms of biological role, transfers the gamma-phosphate of ATP to the 4'-position of a tetraacyldisaccharide 1-phosphate intermediate (termed DS-1-P) to form tetraacyldisaccharide 1,4'-bis-phosphate (lipid IVA). The polypeptide is Tetraacyldisaccharide 4'-kinase (Mesorhizobium japonicum (strain LMG 29417 / CECT 9101 / MAFF 303099) (Mesorhizobium loti (strain MAFF 303099))).